Here is an 86-residue protein sequence, read N- to C-terminus: MRCSVLFVVSYVIMSLLISHVQGMEDQKWKKVCNLEGNFPGRCVGNGDEQCKRDLTEDGNNPSKCRCRFRAGRRHCRCIYCEVFGM.

A signal peptide spans 1–23 (MRCSVLFVVSYVIMSLLISHVQG). Intrachain disulfides connect C33/C81, C43/C67, C51/C76, and C65/C78.

Belongs to the DEFL family. In terms of tissue distribution, expressed specifically in anthers.

It localises to the secreted. Involved in self-incompatibility. The sequence is that of Defensin-like protein a (SCRa) from Arabidopsis lyrata (Lyre-leaved rock-cress).